We begin with the raw amino-acid sequence, 427 residues long: Enolase (427 aa).

Residue Q163 coordinates (2R)-2-phosphoglycerate. E205 serves as the catalytic Proton donor. Mg(2+) is bound by residues D242, E287, and D314. (2R)-2-phosphoglycerate is bound by residues K339, R368, S369, and K390. Residue K339 is the Proton acceptor of the active site.

The protein belongs to the enolase family. The cofactor is Mg(2+).

Its subcellular location is the cytoplasm. It is found in the secreted. The protein resides in the cell surface. It catalyses the reaction (2R)-2-phosphoglycerate = phosphoenolpyruvate + H2O. The protein operates within carbohydrate degradation; glycolysis; pyruvate from D-glyceraldehyde 3-phosphate: step 4/5. In terms of biological role, catalyzes the reversible conversion of 2-phosphoglycerate (2-PG) into phosphoenolpyruvate (PEP). It is essential for the degradation of carbohydrates via glycolysis. The protein is Enolase of Solibacter usitatus (strain Ellin6076).